The sequence spans 475 residues: UDP-N-acetylmuramate--L-alanine ligase (475 aa).

Position 125-131 (125-131) interacts with ATP; the sequence is GTHGKTT.

Belongs to the MurCDEF family.

The protein localises to the cytoplasm. It carries out the reaction UDP-N-acetyl-alpha-D-muramate + L-alanine + ATP = UDP-N-acetyl-alpha-D-muramoyl-L-alanine + ADP + phosphate + H(+). It functions in the pathway cell wall biogenesis; peptidoglycan biosynthesis. Functionally, cell wall formation. The polypeptide is UDP-N-acetylmuramate--L-alanine ligase (Actinobacillus pleuropneumoniae serotype 5b (strain L20)).